A 94-amino-acid polypeptide reads, in one-letter code: Co-chaperonin GroES (94 aa).

Belongs to the GroES chaperonin family. Heptamer of 7 subunits arranged in a ring. Interacts with the chaperonin GroEL.

The protein localises to the cytoplasm. Functionally, together with the chaperonin GroEL, plays an essential role in assisting protein folding. The GroEL-GroES system forms a nano-cage that allows encapsulation of the non-native substrate proteins and provides a physical environment optimized to promote and accelerate protein folding. GroES binds to the apical surface of the GroEL ring, thereby capping the opening of the GroEL channel. The chain is Co-chaperonin GroES from Latilactobacillus sakei subsp. sakei (strain 23K) (Lactobacillus sakei subsp. sakei).